Consider the following 265-residue polypeptide: MDSYLLMWGLLTLIMVPGCFAELCDDDPPEITHATFKAMAYKEGTMLNCECKRGFRRIKSGSLYMLCTGNSSHSSWDNQCQCTSSATRNTTKQVTPQPEEQKERKTTEMQSPMQPVDQASLPGHCREPPPWENEATERIYHFVVGQTVYYQCVQGYRALHRGPAESVCKMTHGKTRWTQPQLICTGEMETSQFPGEEKPQASPEGRPESETSCLITTTDFQIQTEMAATMETFIFTTEYQVAVAGCVFLLISVLLLSGLTWQRRQ.

The N-terminal stretch at 1–21 (MDSYLLMWGLLTLIMVPGCFA) is a signal peptide. The 63-residue stretch at 22–84 (ELCDDDPPEI…SWDNQCQCTS (63 aa)) folds into the Sushi 1 domain. Topologically, residues 22 to 240 (ELCDDDPPEI…ETFIFTTEYQ (219 aa)) are extracellular. 3 disulfides stabilise this stretch: cysteine 24-cysteine 67, cysteine 49-cysteine 80, and cysteine 51-cysteine 82. Residues asparagine 70 and asparagine 89 are each glycosylated (N-linked (GlcNAc...) asparagine). Over residues 87–98 (TRNTTKQVTPQP) the composition is skewed to polar residues. Residues 87–123 (TRNTTKQVTPQPEEQKERKTTEMQSPMQPVDQASLPG) are disordered. A Sushi 2 domain is found at 123–186 (GHCREPPPWE…WTQPQLICTG (64 aa)). 2 disulfides stabilise this stretch: cysteine 125/cysteine 168 and cysteine 152/cysteine 184. Positions 190–210 (TSQFPGEEKPQASPEGRPESE) are disordered. Positions 195–209 (GEEKPQASPEGRPES) are enriched in basic and acidic residues. A helical membrane pass occupies residues 241-259 (VAVAGCVFLLISVLLLSGL). The Cytoplasmic segment spans residues 260–265 (TWQRRQ).

In terms of assembly, non-covalent dimer of an alpha and a beta subunit. IL2R exists in 3 different forms: a high affinity dimer, an intermediate affinity monomer (beta subunit), and a low affinity monomer (alpha subunit). The high and intermediate affinity forms also associate with a gamma subunit.

Its subcellular location is the membrane. In terms of biological role, receptor for interleukin-2. The receptor is involved in the regulation of immune tolerance by controlling regulatory T cells (TREGs) activity. TREGs suppress the activation and expansion of autoreactive T-cells. In Pan troglodytes (Chimpanzee), this protein is Interleukin-2 receptor subunit alpha (IL2RA).